Reading from the N-terminus, the 384-residue chain is Chaperone protein DnaJ (384 aa).

In terms of domain architecture, J spans 5–70; that stretch reads DYYEILGVTR…QKKRIYDTYG (66 aa). The CR-type zinc-finger motif lies at 134–212; the sequence is GTEKEIRLQT…CNGQGRTRQS (79 aa). Residues Cys-147, Cys-150, Cys-164, Cys-167, Cys-186, Cys-189, Cys-200, and Cys-203 each coordinate Zn(2+). CXXCXGXG motif repeat units lie at residues 147 to 154, 164 to 171, 186 to 193, and 200 to 207; these read CEECNGSG, CPVCQGSG, CTRCQGMG, and CKTCNGQG. The segment at 352-384 is disordered; sequence KEKSGEKVRKWPWSKRKDREKKSMAESTREART.

The protein belongs to the DnaJ family. Homodimer. The cofactor is Zn(2+).

The protein resides in the cytoplasm. Its function is as follows. Participates actively in the response to hyperosmotic and heat shock by preventing the aggregation of stress-denatured proteins and by disaggregating proteins, also in an autonomous, DnaK-independent fashion. Unfolded proteins bind initially to DnaJ; upon interaction with the DnaJ-bound protein, DnaK hydrolyzes its bound ATP, resulting in the formation of a stable complex. GrpE releases ADP from DnaK; ATP binding to DnaK triggers the release of the substrate protein, thus completing the reaction cycle. Several rounds of ATP-dependent interactions between DnaJ, DnaK and GrpE are required for fully efficient folding. Also involved, together with DnaK and GrpE, in the DNA replication of plasmids through activation of initiation proteins. The chain is Chaperone protein DnaJ from Syntrophobacter fumaroxidans (strain DSM 10017 / MPOB).